We begin with the raw amino-acid sequence, 496 residues long: SRCTHLENRDFVTGTQGTTRVTLVLELGGCVTITAEGKPSMDVWLDAIYQESPAKTREYCLHAKLSETKVAARCPTMGPAVLTEERQIGTVCKRDQSDRGWGNHCGLFGKGSIVACVKAACEAKKKATGYVYDANKIVYTVKVEPHTGDYVAANETHKGRKTATFTVSSEKTILTLGEYGDVSLLCRVASGVDLAQTIILELDKTAEHLPTAWQVHRDWFNDLALPWKHDGNPHWNNAERLVEFGAPHAVKMDVYNLGDQTGVLLKALAGVPVAHIEGNKYHLKSGHVTCEVGLEKLKMKGLTYTMCDKSKFAWKRTPTDSGHDTVVMEVTFSGSKPCRIPVRAVAHGSPDVNVAMLITPNPTIENDGGGFIEMQLPPGDNIIYVGELSHQWFQTGSSIGRVFQTTRKGIERLTVIGEHAWDFGSAGGFFSSIGKAVHTVLGGAFNSIFGGVGFLPKLLMGVALAWLGLNTRNPTMSMSFLLAGGLVLAMTLGVGA.

Over 1 to 447 (SRCTHLENRD…HTVLGGAFNS (447 aa)) the chain is Extracellular. Intrachain disulfides connect Cys-3–Cys-30, Cys-60–Cys-116, Cys-60–Cys-121, Cys-74–Cys-105, Cys-92–Cys-116, and Cys-92–Cys-121. Residues 98–111 (DRGWGNHCGLFGKG) form a fusion peptide region. Asn-154 is a glycosylation site (N-linked (GlcNAc...) asparagine; by host). 2 cysteine pairs are disulfide-bonded: Cys-186–Cys-290 and Cys-307–Cys-338. Residues 448–468 (IFGGVGFLPKLLMGVALAWLG) traverse the membrane as a helical segment. The Cytoplasmic segment spans residues 469–479 (LNTRNPTMSMS). Residues 480-496 (FLLAGGLVLAMTLGVGA) traverse the membrane as a helical segment.

In terms of assembly, homodimer; in the endoplasmic reticulum and Golgi. Post-translationally, N-glycosylated.

The protein localises to the virion membrane. It is found in the host endoplasmic reticulum membrane. In terms of biological role, binds to host cell surface receptor and mediates fusion between viral and cellular membranes. Envelope protein is synthesized in the endoplasmic reticulum in the form of heterodimer with protein prM. They play a role in virion budding in the ER, and the newly formed immature particle is covered with 60 spikes composed of heterodimer between precursor prM and envelope protein E. The virion is transported to the Golgi apparatus where the low pH causes dissociation of PrM-E heterodimers and formation of E homodimers. prM-E cleavage is ineficient, and many virions are only partially matured. These uncleaved prM would play a role in immune evasion. The chain is Genome polyprotein from Bos taurus (Bovine).